The chain runs to 365 residues: Testis-specific serine/threonine-protein kinase 1 (365 aa).

The Protein kinase domain occupies 12-272 (YIMGINLGEG…IDEILNHCWV (261 aa)). ATP contacts are provided by residues 18-26 (LGEGSYAKV) and lysine 41. Aspartate 136 serves as the catalytic Proton acceptor. Threonine 174 carries the post-translational modification Phosphothreonine. Residues 282 to 365 (GAINKEGESS…HPQQPSETHT (84 aa)) form a disordered region. Residues 303–330 (GADKKSATKLEPREEARSEARSESKPQE) show a composition bias toward basic and acidic residues. The span at 331 to 347 (DTLQVVRQSENVGLSSE) shows a compositional bias: polar residues.

It belongs to the protein kinase superfamily. CAMK Ser/Thr protein kinase family. In terms of assembly, interacts with TSSK2. Interacts with HSP90; this interaction stabilizes TSSK1. It depends on Mg(2+) as a cofactor. Post-translationally, autophosphorylated. In terms of processing, ubiquitinated; HSP90 activity negatively regulates ubiquitination and degradation. In terms of tissue distribution, testis-specific. Expressed only in postmeiotic spermatids at the final stages of cytodifferentiation in the seminiferous tubules (at protein level). Not detected in released sperms in the lumen of the seminiferous tubules and the epididymis.

The protein localises to the cytoplasm. The protein resides in the cytoplasmic vesicle. Its subcellular location is the secretory vesicle. It localises to the acrosome. It is found in the cell projection. The protein localises to the cilium. The protein resides in the flagellum. It catalyses the reaction L-seryl-[protein] + ATP = O-phospho-L-seryl-[protein] + ADP + H(+). It carries out the reaction L-threonyl-[protein] + ATP = O-phospho-L-threonyl-[protein] + ADP + H(+). With respect to regulation, activated by phosphorylation on Thr-174, potentially by autophosphorylation. Functionally, testis-specific serine/threonine-protein kinase required during spermatid development. Phosphorylates 'Ser-281' of TSKS. Involved in the late stages of spermatogenesis, during the reconstruction of the cytoplasm. During spermatogenesis, required for the transformation of a ring-shaped structure around the base of the flagellum originating from the chromatoid body. In Mus musculus (Mouse), this protein is Testis-specific serine/threonine-protein kinase 1 (Tssk1b).